The following is a 180-amino-acid chain: Cytokinin-beta-glucosidase 2 (180 aa).

Hydrolyzes cytokinin glucosides thus liberating free cytokinins. This chain is Cytokinin-beta-glucosidase 2 (ROLC2), found in Linaria vulgaris (Toadflax).